We begin with the raw amino-acid sequence, 316 residues long: DNA-directed RNA polymerase III subunit RPC6 (316 aa).

Ala2 bears the N-acetylalanine mark. Residues Lys5 and Lys7 each participate in a glycyl lysine isopeptide (Lys-Gly) (interchain with G-Cter in SUMO2) cross-link. [4Fe-4S] cluster-binding residues include Cys287, Cys290, Cys296, and Cys307.

It belongs to the eukaryotic RPC34/RPC39 RNA polymerase subunit family. In terms of assembly, component of the RNA polymerase III complex consisting of 17 subunits: a ten-subunit horseshoe-shaped catalytic core composed of POLR3A/RPC1, POLR3B/RPC2, POLR1C/RPAC1, POLR1D/RPAC2, POLR3K/RPC10, POLR2E/RPABC1, POLR2F/RPABC2, POLR2H/RPABC3, POLR2K/RPABC4 and POLR2L/RPABC5; a mobile stalk composed of two subunits POLR3H/RPC8 and CRCP/RPC9, protruding from the core and functioning primarily in transcription initiation; and additional subunits homologous to general transcription factors of the RNA polymerase II machinery, POLR3C/RPC3-POLR3F/RPC6-POLR3G/RPC7 heterotrimer required for transcription initiation and POLR3D/RPC4-POLR3E/RPC5 heterodimer involved in both transcription initiation and termination. Directly interacts with POLR3C. Interacts with TBP and TFIIIB90 and GTF3C4. Interacts with MAF1. As part of the RNA polymerase III complex, interacts with PKP2.

Its subcellular location is the nucleus. DNA-dependent RNA polymerase catalyzes the transcription of DNA into RNA using the four ribonucleoside triphosphates as substrates. Specific peripheric component of RNA polymerase III (Pol III) which synthesizes small non-coding RNAs including 5S rRNA, snRNAs, tRNAs and miRNAs from at least 500 distinct genomic loci. Part of POLR3C/RPC3-POLR3F/RPC6-POLR3G/RPC7 heterotrimer that coordinates the dynamics of Pol III stalk and clamp modules during the transition from apo to elongation state. Pol III plays a key role in sensing and limiting infection by intracellular bacteria and DNA viruses, including varicella zoster virus. Acts as a nuclear and cytosolic DNA sensor detecting AT-rich DNA, involved in innate immune response. Can sense non-self dsDNA that serves as template for transcription into dsRNA. The non-self RNA polymerase III transcripts, such as Epstein-Barr virus-encoded RNAs (EBERs) induce type I interferon and NF-kappa-B through the RIG-I pathway. Preferentially binds double-stranded DNA (dsDNA). The protein is DNA-directed RNA polymerase III subunit RPC6 of Mus musculus (Mouse).